The chain runs to 85 residues: Large ribosomal subunit protein bL31B (85 aa).

The protein belongs to the bacterial ribosomal protein bL31 family. Type B subfamily. As to quaternary structure, part of the 50S ribosomal subunit.

This is Large ribosomal subunit protein bL31B from Micrococcus luteus (strain ATCC 4698 / DSM 20030 / JCM 1464 / CCM 169 / CCUG 5858 / IAM 1056 / NBRC 3333 / NCIMB 9278 / NCTC 2665 / VKM Ac-2230) (Micrococcus lysodeikticus).